The chain runs to 615 residues: 1-deoxy-D-xylulose-5-phosphate synthase (615 aa).

Thiamine diphosphate-binding positions include His72 and Gly113–Ala115. Residue Asp144 participates in Mg(2+) binding. Thiamine diphosphate is bound by residues Gly145–Ala146, Asn173, Tyr281, and Glu360. Asn173 contacts Mg(2+).

This sequence belongs to the transketolase family. DXPS subfamily. In terms of assembly, homodimer. It depends on Mg(2+) as a cofactor. Requires thiamine diphosphate as cofactor.

It catalyses the reaction D-glyceraldehyde 3-phosphate + pyruvate + H(+) = 1-deoxy-D-xylulose 5-phosphate + CO2. It participates in metabolic intermediate biosynthesis; 1-deoxy-D-xylulose 5-phosphate biosynthesis; 1-deoxy-D-xylulose 5-phosphate from D-glyceraldehyde 3-phosphate and pyruvate: step 1/1. Catalyzes the acyloin condensation reaction between C atoms 2 and 3 of pyruvate and glyceraldehyde 3-phosphate to yield 1-deoxy-D-xylulose-5-phosphate (DXP). This Thermus thermophilus (strain ATCC 27634 / DSM 579 / HB8) protein is 1-deoxy-D-xylulose-5-phosphate synthase.